The sequence spans 204 residues: Imidazoleglycerol-phosphate dehydratase (204 aa).

The protein belongs to the imidazoleglycerol-phosphate dehydratase family.

Its subcellular location is the cytoplasm. It carries out the reaction D-erythro-1-(imidazol-4-yl)glycerol 3-phosphate = 3-(imidazol-4-yl)-2-oxopropyl phosphate + H2O. It functions in the pathway amino-acid biosynthesis; L-histidine biosynthesis; L-histidine from 5-phospho-alpha-D-ribose 1-diphosphate: step 6/9. This Rhodococcus opacus (strain B4) protein is Imidazoleglycerol-phosphate dehydratase.